Consider the following 149-residue polypeptide: UPF0260 protein PSPTO_3918 (149 aa).

It belongs to the UPF0260 family.

The sequence is that of UPF0260 protein PSPTO_3918 from Pseudomonas syringae pv. tomato (strain ATCC BAA-871 / DC3000).